The chain runs to 422 residues: Testin (422 aa).

The 108-residue stretch at 92–199 (MILTSPVAAK…GDVKLPKEVE (108 aa)) folds into the PET domain. Residues 135-165 (QPVAGSEGAQYRKKQLAKQLPAHDQDPSKCH) form a disordered region. The span at 155–165 (PAHDQDPSKCH) shows a compositional bias: basic and acidic residues. 3 consecutive LIM zinc-binding domains span residues 234-299 (YYCF…SEKP), 300-359 (RCAG…NHAV), and 360-422 (SCQG…KMSS).

It belongs to the prickle / espinas / testin family. As to expression, expressed in the animal hemisphere at the 4-cell stage. By stage 18, expressed in cells adjacent to the anterior neural plate. In late neurula, expressed in the cranial neural crest. At tail bud stages, expressed strongly in the head, ventral to the developing eye, branchial arches and lateral line placodes. Also localized in the otic vesicle, dorsal fin and notochord with weaker expression at intersomitic junctions of tail bud embryos.

It is found in the cytoplasm. It localises to the cell cortex. The protein localises to the cell junction. The protein resides in the focal adhesion. Its function is as follows. Scaffold protein that may play a role in cell adhesion, cell spreading and in the reorganization of the actin cytoskeleton. May inhibit cell growth. Regulates cranial neural crest migration. Acts together with prickle1 to control axial elongation. This Xenopus laevis (African clawed frog) protein is Testin.